The sequence spans 763 residues: Phosphoglycerol transferase I (763 aa).

4 helical membrane passes run 1-21 (MSEL…AWKA), 26-46 (WWFA…ITLF), 77-97 (ILPG…LGWI), and 108-128 (FGYS…SPAF).

This sequence belongs to the OpgB family.

The protein localises to the cell inner membrane. The catalysed reaction is a phosphatidylglycerol + a membrane-derived-oligosaccharide D-glucose = a 1,2-diacyl-sn-glycerol + a membrane-derived-oligosaccharide 6-(glycerophospho)-D-glucose.. Its pathway is glycan metabolism; osmoregulated periplasmic glucan (OPG) biosynthesis. In terms of biological role, transfers a phosphoglycerol residue from phosphatidylglycerol to the membrane-bound nascent glucan backbones. This chain is Phosphoglycerol transferase I, found in Escherichia coli O6:K15:H31 (strain 536 / UPEC).